The following is a 209-amino-acid chain: PRA1 family protein A3 (209 aa).

4 helical membrane-spanning segments follow: residues 51-72 (LYYYRTNYFILFVFVLGLALIT), 76-98 (AILGAALTALSLAFLNDSFAATF), 143-163 (LVFVLLGLTASFVLWFTSCGL), and 164-184 (LWVLYALTTALLMILLHASLR).

Belongs to the PRA1 family.

It localises to the endosome membrane. Functionally, may be involved in both secretory and endocytic intracellular trafficking in the endosomal/prevacuolar compartments. The protein is PRA1 family protein A3 (PRA1A3) of Arabidopsis thaliana (Mouse-ear cress).